The following is a 447-amino-acid chain: Phosphoglucosamine mutase (447 aa).

S101 (phosphoserine intermediate) is an active-site residue. The Mg(2+) site is built by S101, D242, D244, and D246. Phosphoserine is present on S101.

It belongs to the phosphohexose mutase family. It depends on Mg(2+) as a cofactor. Activated by phosphorylation.

The enzyme catalyses alpha-D-glucosamine 1-phosphate = D-glucosamine 6-phosphate. In terms of biological role, catalyzes the conversion of glucosamine-6-phosphate to glucosamine-1-phosphate. The chain is Phosphoglucosamine mutase from Xanthobacter autotrophicus (strain ATCC BAA-1158 / Py2).